We begin with the raw amino-acid sequence, 514 residues long: Putative ankyrin repeat protein R863 (514 aa).

ANK repeat units lie at residues 45–74 (AKID…LKHP), 84–114 (KSLN…DINS), 115–144 (KKNR…DVRA), 146–174 (KDYA…NIKV), 176–204 (DNFA…NIRA), 205–234 (DNNY…DIRA), 236–264 (NNYA…NVKS), 266–294 (NDCA…DVRS), 295–324 (ENDY…NVRA), 325–354 (DNNY…NIRS), 356–384 (NDYA…NFKS), 385–414 (DYDC…DIRV), 415–444 (NNDY…DIRA), 446–474 (NDYA…NVKA), and 476–504 (NNYA…DVRS).

The protein is Putative ankyrin repeat protein R863 of Acanthamoeba polyphaga mimivirus (APMV).